The chain runs to 273 residues: Dermonecrotic toxin LsaSicTox-alphaIB1avi (273 aa).

The active site involves His-5. The Mg(2+) site is built by Glu-25 and Asp-27. The active-site Nucleophile is the His-41. Intrachain disulfides connect Cys-45–Cys-51 and Cys-47–Cys-190. Mg(2+) is bound at residue Asp-85.

It belongs to the arthropod phospholipase D family. Class II subfamily. Mg(2+) serves as cofactor. In terms of tissue distribution, expressed by the venom gland.

It is found in the secreted. The catalysed reaction is an N-(acyl)-sphingosylphosphocholine = an N-(acyl)-sphingosyl-1,3-cyclic phosphate + choline. It catalyses the reaction an N-(acyl)-sphingosylphosphoethanolamine = an N-(acyl)-sphingosyl-1,3-cyclic phosphate + ethanolamine. The enzyme catalyses a 1-acyl-sn-glycero-3-phosphocholine = a 1-acyl-sn-glycero-2,3-cyclic phosphate + choline. It carries out the reaction a 1-acyl-sn-glycero-3-phosphoethanolamine = a 1-acyl-sn-glycero-2,3-cyclic phosphate + ethanolamine. Functionally, dermonecrotic toxins cleave the phosphodiester linkage between the phosphate and headgroup of certain phospholipids (sphingolipid and lysolipid substrates), forming an alcohol (often choline) and a cyclic phosphate. This toxin acts on sphingomyelin (SM). It may also act on ceramide phosphoethanolamine (CPE), lysophosphatidylcholine (LPC) and lysophosphatidylethanolamine (LPE), but not on lysophosphatidylserine (LPS), and lysophosphatidylglycerol (LPG). It acts by transphosphatidylation, releasing exclusively cyclic phosphate products as second products. Induces dermonecrosis, hemolysis, increased vascular permeability, edema, inflammatory response, and platelet aggregation. This chain is Dermonecrotic toxin LsaSicTox-alphaIB1avi, found in Loxosceles sabina (Tucson recluse spider).